An 81-amino-acid chain; its full sequence is Beta-catenin-interacting protein 1 (81 aa).

The residue at position 59 (S59) is a Phosphoserine.

Belongs to the CTNNBIP1 family. As to quaternary structure, binds CTNNB1. As to expression, highly expressed in heart, brain, liver and skeletal muscle. Detected at low levels in kidney, testis and lung.

The protein localises to the cytoplasm. Its subcellular location is the nucleus. Functionally, prevents the interaction between CTNNB1 and TCF family members, and acts as a negative regulator of the Wnt signaling pathway. The polypeptide is Beta-catenin-interacting protein 1 (Ctnnbip1) (Mus musculus (Mouse)).